Reading from the N-terminus, the 342-residue chain is Nicotinate-nucleotide--dimethylbenzimidazole phosphoribosyltransferase (342 aa).

The active-site Proton acceptor is the glutamate 311.

This sequence belongs to the CobT family.

The enzyme catalyses 5,6-dimethylbenzimidazole + nicotinate beta-D-ribonucleotide = alpha-ribazole 5'-phosphate + nicotinate + H(+). Its pathway is nucleoside biosynthesis; alpha-ribazole biosynthesis; alpha-ribazole from 5,6-dimethylbenzimidazole: step 1/2. Its function is as follows. Catalyzes the synthesis of alpha-ribazole-5'-phosphate from nicotinate mononucleotide (NAMN) and 5,6-dimethylbenzimidazole (DMB). The sequence is that of Nicotinate-nucleotide--dimethylbenzimidazole phosphoribosyltransferase from Shewanella sediminis (strain HAW-EB3).